Consider the following 348-residue polypeptide: Dehydrogenase orsE (348 aa).

43–46 (LDTH) provides a ligand contact to NADP(+). Residue 130–137 (FAVEAAVC) coordinates substrate. Residues 180–183 (SSSV), 203–206 (GAHN), and 272–273 (VH) contribute to the NADP(+) site. 292 to 296 (NDIAT) contacts substrate. An NADP(+)-binding site is contributed by 339-340 (VS).

The protein belongs to the zinc-containing alcohol dehydrogenase family. Monomer.

In terms of biological role, dehydrogenase; part of the gene cluster that mediates the biosynthesis of orsellinic acid, as well as of the cathepsin K inhibitors F9775 A and F9775 B. The non-reducing polyketide synthase orsA produces orsellinic acid by condensing acetyl-CoA with 3 malonyl-CoA units. Further modifications by the decarboxylase orsB and the tyrosinase-like protein orsC lead to the production of F9775 A and F9775 B. The functions of orsD and orsE remain unclear since only orsB and orsC are required to convert orsellinic acid into F9775 A and F9775 B. The protein is Dehydrogenase orsE of Emericella nidulans (strain FGSC A4 / ATCC 38163 / CBS 112.46 / NRRL 194 / M139) (Aspergillus nidulans).